The primary structure comprises 178 residues: Stathmin-2-B (178 aa).

The region spanning aspartate 38–glycine 178 is the SLD domain. Residues lysine 75–glycine 178 adopt a coiled-coil conformation.

Belongs to the stathmin family. In terms of tissue distribution, nervous tissue.

It localises to the cytoplasm. The protein resides in the membrane. It is found in the cell projection. Its subcellular location is the lamellipodium. This chain is Stathmin-2-B (stmn2-b), found in Xenopus laevis (African clawed frog).